Consider the following 293-residue polypeptide: tRNA pseudouridine synthase B (293 aa).

Aspartate 38 (nucleophile) is an active-site residue.

This sequence belongs to the pseudouridine synthase TruB family. Type 1 subfamily.

The catalysed reaction is uridine(55) in tRNA = pseudouridine(55) in tRNA. Its function is as follows. Responsible for synthesis of pseudouridine from uracil-55 in the psi GC loop of transfer RNAs. In Trichormus variabilis (strain ATCC 29413 / PCC 7937) (Anabaena variabilis), this protein is tRNA pseudouridine synthase B.